A 73-amino-acid chain; its full sequence is Biotin/lipoyl attachment protein (73 aa).

Residues 2 to 69 (TVSIQMAGNL…NEGDVLLELS (68 aa)) form the Biotinyl-binding domain. Lysine 35 is subject to N6-biotinyllysine; alternate. Position 35 is an N6-lipoyllysine; alternate (lysine 35).

In terms of processing, can be both biotinylated and lipoylated on Lys-35 upon overexpression in E.coli depending on the growth medium; the nature of the modification in situ in B.subtilis is unknown.

This Bacillus subtilis (strain 168) protein is Biotin/lipoyl attachment protein (yngHB).